A 415-amino-acid polypeptide reads, in one-letter code: Corticotropin-releasing factor receptor 1 (415 aa).

The first 24 residues, 1–24 (MLLAKTPCLLLVQVIAAGISFALT), serve as a signal peptide directing secretion. Over 25-111 (SLQDQCETLQ…CQEILKQEKK (87 aa)) the chain is Extracellular. Cystine bridges form between Cys30-Cys54, Cys44-Cys87, and Cys68-Cys102. N-linked (GlcNAc...) asparagine glycans are attached at residues Asn38, Asn45, Asn78, and Asn90. The helical transmembrane segment at 112–142 (TKVHYHIAIVINFLGHSISLCALLVAFILFL) threads the bilayer. The Cytoplasmic portion of the chain corresponds to 143 to 149 (RLRSIRC). The chain crosses the membrane as a helical span at residues 150–174 (LRNIIHWNLITAFILRNVTWFVMQL). Topologically, residues 175–189 (TLSHEAHDSNVVWCR) are extracellular. A disulfide bridge connects residues Cys188 and Cys258. Residues 190-218 (LVTIAHNYFYVTNFFWMFGEGCYLHTAIV) traverse the membrane as a helical segment. The Cytoplasmic portion of the chain corresponds to 219–225 (LTYSTDK). Residues 226–253 (LRKWMFICIGWCIPFPIIVAWAIGKLYY) traverse the membrane as a helical segment. Topologically, residues 254–269 (DNEKCWFGKKAGVYTD) are extracellular. The helical transmembrane segment at 270 to 295 (FIYQGPVILVLLINFIFLFNIVRILM) threads the bilayer. Over 296–306 (TKLRASTTSET) the chain is Cytoplasmic. Residues 307 to 331 (IQYRKAVKATLVLLPLLGITYMLFF) form a helical membrane-spanning segment. The Extracellular portion of the chain corresponds to 332-338 (VTPGEDE). Residues 339 to 368 (ISRIVFIYFNSFLQSFQGFFVSVFYCFLNS) traverse the membrane as a helical segment. Topologically, residues 369-415 (EVRSAVRKRWHRWQDKHSIRARVARAMSIPTSPTRISFHSIKQSSAI) are cytoplasmic.

This sequence belongs to the G-protein coupled receptor 2 family. Interacts (via N-terminal extracellular domain) with CRF and UCN.

The protein localises to the cell membrane. Its function is as follows. G-protein coupled receptor for CRH (corticotropin-releasing factor) and UCN (urocortin). Has high affinity for CRH and UCN. Ligand binding causes a conformation change that triggers signaling via guanine nucleotide-binding proteins (G proteins) and down-stream effectors, such as adenylate cyclase. Promotes the activation of adenylate cyclase, leading to increased intracellular cAMP levels. The sequence is that of Corticotropin-releasing factor receptor 1 (crhr1) from Xenopus laevis (African clawed frog).